The primary structure comprises 391 residues: MADIDNKEQSELDQDLDDVEEVEEEETGEETKLKARQLTVQMMQNPQILAALQERLDGLVETPTGYIESLPRVVKRRVNALKNLQVKCAQIEAKFYEEVHDLERKYAVLYQPLFDKRFEIINAIYEPTEEECEWKPDEEDEISEELKEKAKIEDEKKDEEKEDPKGIPEFWLTVFKNVDLLSDMVQEHDEPILKHLKDIKVKFSDAGQPMSFVLEFHFEPNEYFTNEVLTKTYRMRSEPDDSDPFSFDGPEIMGCTGCQIDWKKGKNVTLKTIKKKQKHKGRGTVRTVTKTVSNDSFFNFFAPPEVPESGDLDDDAEAILAADFEIGHFLRERIIPRSVLYFTGEAIEDDDDDYDEEGEEADEEGEEEGDEENDPDYDPKKDQNPAECKQQ.

Position 1 is an N-acetylmethionine (Met-1). Over residues 1–10 (MADIDNKEQS) the composition is skewed to basic and acidic residues. The segment at 1–32 (MADIDNKEQSELDQDLDDVEEVEEEETGEETK) is disordered. Ala-2 bears the N-acetylalanine mark. The residue at position 10 (Ser-10) is a Phosphoserine. Acidic residues predominate over residues 11-28 (ELDQDLDDVEEVEEEETG). Residues Thr-62 and Thr-64 each carry the phosphothreonine modification. Position 69 is a phosphoserine (Ser-69). An N6-acetyllysine modification is found at Lys-116. Positions 125–150 (YEPTEEECEWKPDEEDEISEELKEKA) match the NAP1L motif motif. Positions 132–143 (CEWKPDEEDEIS) are enriched in acidic residues. The disordered stretch occupies residues 132–163 (CEWKPDEEDEISEELKEKAKIEDEKKDEEKED). The residue at position 143 (Ser-143) is a Phosphoserine. Basic and acidic residues predominate over residues 144 to 163 (EELKEKAKIEDEKKDEEKED). The Nuclear localization signal signature appears at 273-279 (IKKKQKH). A compositionally biased stretch (acidic residues) spans 346–376 (AIEDDDDDYDEEGEEADEEGEEEGDEENDPD). Residues 346–391 (AIEDDDDDYDEEGEEADEEGEEEGDEENDPDYDPKKDQNPAECKQQ) form a disordered region. Residues 377-391 (YDPKKDQNPAECKQQ) show a composition bias toward basic and acidic residues. Cysteine methyl ester is present on Cys-388. Cys-388 is lipidated: S-farnesyl cysteine. Positions 389 to 391 (KQQ) are cleaved as a propeptide — removed in mature form.

It belongs to the nucleosome assembly protein (NAP) family. As to quaternary structure, homodimer. The dimer binds strongly and sequentially to single and double H2A-H2B heterodimers. Interacts with ERCC6; this interaction increases ERCC6 processivity. Interacts with RAD54. Interacts with SETD1A. (Microbial infection) Interacts with human herpesvirus 8 protein LANA1 (via N-terminus); this interaction is required for LANA1-dependent DNA replication. In terms of assembly, (Microbial infection) Interacts with hepatitis virus protein NS5A (via C-terminus); this interaction sequesters NAP1L1 in the cytoplasm, blocking its nuclear translocation. As to quaternary structure, (Microbial infection) Interacts with Chikungunya virus non-structural protein 3 (via C-terminus). In terms of processing, monoglycylated on glutamate residues. Cannot be polyglycylated due to the absence of functional TTLL10 in human. Polyglutamylated by TTLL4 on glutamate residues, resulting in polyglutamate chains on the gamma-carboxyl group. Both polyglutamylation and monoglycylation modifications can coexist on the same protein on adjacent residues, and lowering polyglycylation levels increases polyglutamylation, and reciprocally. In terms of tissue distribution, ubiquitously expressed.

It is found in the nucleus. Its subcellular location is the melanosome. The protein resides in the cytoplasm. Histone chaperone that plays a role in the nuclear import of H2A-H2B and nucleosome assembly. Also participates in several important DNA repair mechanisms: greatly enhances ERCC6-mediated chromatin remodeling which is essential for transcription-coupled nucleotide excision DNA repair. Also stimulates homologous recombination (HR) by RAD51 and RAD54 which is essential in mitotic DNA double strand break (DSB) repair. Plays a key role in the regulation of embryonic neurogenesis. Promotes the proliferation of neural progenitors and inhibits neuronal differentiation during cortical development. Regulates neurogenesis via the modulation of RASSF10; regulates RASSF10 expression by promoting SETD1A-mediated H3K4 methylation at the RASSF10 promoter. Its function is as follows. (Microbial infection) Positively regulates Epstein-Barr virus reactivation in epithelial cells through the induction of viral BZLF1 expression. Functionally, (Microbial infection) Together with human herpesvirus 8 protein LANA1, assists the proper assembly of the nucleosome on the replicated viral DNA. The polypeptide is Nucleosome assembly protein 1-like 1 (NAP1L1) (Homo sapiens (Human)).